The primary structure comprises 1594 residues: RB1-inducible coiled-coil protein 1 (1594 aa).

Ser-222, Ser-229, and Ser-237 each carry phosphoserine. A Phosphothreonine modification is found at Thr-238. Residues Ser-243, Ser-253, Ser-257, Ser-261, and Ser-266 each carry the phosphoserine modification. The Nuclear localization signal motif lies at 566–569 (KPRK). Ser-624, Ser-647, Ser-650, Ser-652, Ser-653, Ser-734, Ser-1091, Ser-1222, Ser-1370, and Ser-1484 each carry phosphoserine. The disordered stretch occupies residues 638-673 (EQKASVSQTSPQSASSPRMESTAGITTTTSPRTPPP). Over residues 641–654 (ASVSQTSPQSASSP) the composition is skewed to low complexity. The short motif at 731–737 (DFMSAVN) is the FFAT element. 2 coiled-coil regions span residues 859-1397 (LKEK…SSSF) and 1438-1485 (METS…SQSM).

Belongs to the ATG17 family. Part of a complex consisting of ATG13/KIAA0652, ULK1 and RB1CC1. This complex associates with ATG101. Interacts with PTK2/FAK1 and PTK2B/PYK2. Interacts with GABARAP and GABARAPL1. Interacts with ATG16L1; the interaction is required for ULK1 complex-dependent autophagy. Interacts with RNF111, SKI and SMAD7. Interacts with COP1 in the cytoplasm of proliferating cells in response to UV stimulation. Interacts with TP53. Interacts with C9orf72. Interacts with WDR45B. Interacts with ATG13; this interaction is increased in the absence of TMEM39A. Interacts with WIPI2. Interacts with TAX1BP1. Interacts (via phosphorylated FFAT motif) with MOSPD2, VAPA and VAPB. Phosphorylation at Ser-734 of the FFAT motif activates interaction with MOSPD2, VAPA and VAPB. Expression levels correlated closely with those of RB1 in cancer cell lines as well as in various normal human tissues. Abundantly expressed in human musculoskeletal and cultured osteosarcoma cells.

It is found in the nucleus. The protein localises to the cytoplasm. Its subcellular location is the cytosol. It localises to the preautophagosomal structure. The protein resides in the lysosome. In terms of biological role, involved in autophagy. Regulates early events but also late events of autophagosome formation through direct interaction with Atg16L1. Required for the formation of the autophagosome-like double-membrane structure that surrounds the Salmonella-containing vacuole (SCV) during S.typhimurium infection and subsequent xenophagy. Involved in repair of DNA damage caused by ionizing radiation, which subsequently improves cell survival by decreasing apoptosis. Inhibits PTK2/FAK1 and PTK2B/PYK2 kinase activity, affecting their downstream signaling pathways. Plays a role as a modulator of TGF-beta-signaling by restricting substrate specificity of RNF111. Functions as a DNA-binding transcription factor. Is a potent regulator of the RB1 pathway through induction of RB1 expression. Plays a crucial role in muscular differentiation. Plays an indispensable role in fetal hematopoiesis and in the regulation of neuronal homeostasis. This chain is RB1-inducible coiled-coil protein 1, found in Homo sapiens (Human).